Here is a 372-residue protein sequence, read N- to C-terminus: N-methyl-L-tryptophan oxidase (372 aa).

4-34 (DLIIIGSGSVGAAAGYYATRAGLNVLMTDAH) lines the FAD pocket. At Cys308 the chain carries S-8alpha-FAD cysteine.

This sequence belongs to the MSOX/MTOX family. MTOX subfamily. In terms of assembly, monomer. It depends on FAD as a cofactor.

The enzyme catalyses N(alpha)-methyl-L-tryptophan + O2 + H2O = L-tryptophan + formaldehyde + H2O2. Catalyzes the oxidative demethylation of N-methyl-L-tryptophan. This is N-methyl-L-tryptophan oxidase from Escherichia coli O157:H7.